A 110-amino-acid chain; its full sequence is Iron-sulfur cluster assembly protein CyaY (110 aa).

It belongs to the frataxin family.

Its function is as follows. Involved in iron-sulfur (Fe-S) cluster assembly. May act as a regulator of Fe-S biogenesis. The sequence is that of Iron-sulfur cluster assembly protein CyaY from Stutzerimonas stutzeri (strain A1501) (Pseudomonas stutzeri).